The chain runs to 120 residues: Small ribosomal subunit protein bS16 (120 aa).

Residues 80 to 120 are disordered; it reads GLKKRPARNNPHKGEPGKKAQERIAAAKQAAEDAKAAEASA. Residues 81–90 are compositionally biased toward basic residues; that stretch reads LKKRPARNNP. Composition is skewed to basic and acidic residues over residues 91 to 101 and 109 to 120; these read HKGEPGKKAQE and AAEDAKAAEASA.

It belongs to the bacterial ribosomal protein bS16 family.

This Bartonella bacilliformis (strain ATCC 35685 / KC583 / Herrer 020/F12,63) protein is Small ribosomal subunit protein bS16.